Reading from the N-terminus, the 283-residue chain is Bis(5'-nucleosyl)-tetraphosphatase, symmetrical (283 aa).

It belongs to the Ap4A hydrolase family.

It catalyses the reaction P(1),P(4)-bis(5'-adenosyl) tetraphosphate + H2O = 2 ADP + 2 H(+). In terms of biological role, hydrolyzes diadenosine 5',5'''-P1,P4-tetraphosphate to yield ADP. The protein is Bis(5'-nucleosyl)-tetraphosphatase, symmetrical of Serratia proteamaculans (strain 568).